A 286-amino-acid chain; its full sequence is 2-hydroxy-6-oxo-6-phenylhexa-2,4-dienoate hydrolase (286 aa).

One can recognise an AB hydrolase-1 domain in the interval 36–271 (VIMLHGGGPG…RCGHWAQWEH (236 aa)). Substrate is bound by residues 42–43 (GG), N51, N111, S180, and R190. H265 functions as the Proton acceptor in the catalytic mechanism. Residue W266 coordinates substrate.

The protein belongs to the AB hydrolase superfamily. BphD family. As to quaternary structure, homodimer.

It catalyses the reaction 2,6-dioxo-6-phenylhexa-3-enoate + H2O = 2-oxopent-4-enoate + benzoate + H(+). Its pathway is xenobiotic degradation; biphenyl degradation; 2-hydroxy-2,4-pentadienoate and benzoate from biphenyl: step 4/4. Catalyzes an unusual C-C bond hydrolysis of 2-hydroxy-6-oxo-6-phenylhexa-2,4-dienoic acid (HOPDA) to produce benzoic acid and 2-hydroxy-2,4-pentadienoic acid (HPD). The polypeptide is 2-hydroxy-6-oxo-6-phenylhexa-2,4-dienoate hydrolase (Burkholderia cepacia (Pseudomonas cepacia)).